A 392-amino-acid chain; its full sequence is Sugar efflux transporter A (392 aa).

Topologically, residues 1 to 10 are cytoplasmic; the sequence is MIWIMTMARR. The helical transmembrane segment at 11–31 threads the bilayer; the sequence is MNGVYAAFMLVAFMMGVAGAL. At 32–48 the chain is on the periplasmic side; the sequence is QAPTLSLFLSREVGAQP. Residues 49–69 traverse the membrane as a helical segment; sequence FWIGLFYTVNAIAGIGVSLWL. Over 70–81 the chain is Cytoplasmic; the sequence is AKRSDSQGDRRK. A helical membrane pass occupies residues 82 to 102; sequence LIIFCCLMAIGNALLFAFNRH. Residues 103-106 are Periplasmic-facing; it reads YLTL. Residues 107-127 traverse the membrane as a helical segment; it reads ITCGVLLASLANTAMPQLFAL. The Cytoplasmic portion of the chain corresponds to 128 to 149; sequence AREYADNSAREVVMFSSVMRAQ. Residues 150-170 traverse the membrane as a helical segment; sequence LSLAWVIGPPLAFMLALNYGF. A topological domain (periplasmic) is located at residue threonine 171. The helical transmembrane segment at 172–192 threads the bilayer; the sequence is VMFSIAAGIFTLSLVLIAFML. Residues 193-219 lie on the Cytoplasmic side of the membrane; it reads PSVARVELPSENALSMQGGWQDSNVRM. A helical membrane pass occupies residues 220–240; that stretch reads LFVASTLMWTCNTMYIIDMPL. Residues 241–251 are Periplasmic-facing; sequence WISSELGLPDK. The chain crosses the membrane as a helical span at residues 252–272; that stretch reads LAGFLMGTAAGLEIPAMILAG. The Cytoplasmic portion of the chain corresponds to 273–282; the sequence is YYVKRYGKRR. Residues 283–303 traverse the membrane as a helical segment; sequence MMVIAVAAGVLFYTGLIFFNS. The Periplasmic portion of the chain corresponds to 304–308; the sequence is RMALM. A helical transmembrane segment spans residues 309–329; the sequence is TLQLFNAVFIGIVAGIGMLWF. Topologically, residues 330–342 are cytoplasmic; the sequence is QDLMPGRAGAATT. Residues 343–363 traverse the membrane as a helical segment; it reads LFTNSISTGVILAGVIQGAIA. The Periplasmic portion of the chain corresponds to 364-365; it reads QS. A helical membrane pass occupies residues 366–386; the sequence is WGHFAVYWVIAVISVVALFLT. Over 387–392 the chain is Cytoplasmic; that stretch reads AKVKDV.

Belongs to the major facilitator superfamily. Set transporter family.

The protein localises to the cell inner membrane. Functionally, involved in the efflux of sugars. The physiological role may be the detoxification of non-metabolizable sugar analogs. Can transport IPTG, lactose and glucose. Has broad substrate specificity, with preferences for glucosides or galactosides with alkyl or aryl substituents. This is Sugar efflux transporter A (setA) from Escherichia coli (strain K12).